The following is a 246-amino-acid chain: MGRGKVQLKRIENTINRQVTFSKRRSGLLKKANEISVLCDAEVALIIFSTKGKLYKYATDSCMDKILERYERYSYAEKVLISAESDTQGNWCHEYRKLKAKVETIQKCQKHLMGEDLESLNLKELQQLEQQLENSLKHIRSRKSQLMLESINELQRKEKSLQEENKVLQKELVEKQKVQKQQVQWDQTQPQTSSSSSSFMMREALPTTNISNYPAAAGERIEDVAAGQPQHVRIGLPPWMLSHING.

An MADS-box domain is found at 1 to 61 (MGRGKVQLKR…GKLYKYATDS (61 aa)). A K-box domain is found at 88-178 (QGNWCHEYRK…QKELVEKQKV (91 aa)). The segment at 180–199 (KQQVQWDQTQPQTSSSSSSF) is disordered.

As to expression, highly expressed in sterile lemmas, at intermediate levels in stamens, and weakly in lemmas, paleas and carpels.

It localises to the nucleus. Probable transcription factor. The polypeptide is MADS-box transcription factor 14 (MADS14) (Oryza sativa subsp. indica (Rice)).